Reading from the N-terminus, the 116-residue chain is Iron-sulfur cluster insertion protein ErpA (116 aa).

Iron-sulfur cluster contacts are provided by cysteine 44, cysteine 108, and cysteine 110.

Belongs to the HesB/IscA family. In terms of assembly, homodimer. Requires iron-sulfur cluster as cofactor.

In terms of biological role, required for insertion of 4Fe-4S clusters for at least IspG. The sequence is that of Iron-sulfur cluster insertion protein ErpA from Francisella philomiragia subsp. philomiragia (strain ATCC 25017 / CCUG 19701 / FSC 153 / O#319-036).